A 287-amino-acid chain; its full sequence is Protease HtpX (287 aa).

2 consecutive transmembrane segments (helical) span residues 4-24 (IFLL…VMSI) and 33-53 (GGLL…SLAI). H139 is a Zn(2+) binding site. Residue E140 is part of the active site. H143 provides a ligand contact to Zn(2+). Transmembrane regions (helical) follow at residues 154–174 (LIQG…AGII) and 195–215 (AVVF…VAYF). E220 serves as a coordination point for Zn(2+).

It belongs to the peptidase M48B family. It depends on Zn(2+) as a cofactor.

It localises to the cell inner membrane. The sequence is that of Protease HtpX from Shewanella sp. (strain ANA-3).